Here is a 283-residue protein sequence, read N- to C-terminus: Elongation factor Ts (283 aa).

Positions 80-83 (TDFV) are involved in Mg(2+) ion dislocation from EF-Tu.

This sequence belongs to the EF-Ts family.

The protein resides in the cytoplasm. Its function is as follows. Associates with the EF-Tu.GDP complex and induces the exchange of GDP to GTP. It remains bound to the aminoacyl-tRNA.EF-Tu.GTP complex up to the GTP hydrolysis stage on the ribosome. This is Elongation factor Ts from Salmonella paratyphi A (strain ATCC 9150 / SARB42).